The sequence spans 779 residues: uncharacterized protein (779 aa).

2 positions are modified to phosphoserine: S97 and S120. Positions 125–135 (EIDGEDEKKSV) are enriched in basic and acidic residues. Residues 125 to 174 (EIDGEDEKKSVGQESITGSAKRKDRRSKTNGSKRQKAEANREPPSDISLS) form a disordered region. The segment covering 144–158 (AKRKDRRSKTNGSKR) has biased composition (basic residues). The segment covering 159 to 168 (QKAEANREPP) has biased composition (basic and acidic residues). ATP is bound by residues 215 to 222 (GPPGCGKT) and 533 to 540 (GPPGCGKT). The tract at residues 759-779 (DRQKYQRLAKRWSSASTNDAD) is disordered.

The protein belongs to the AAA ATPase family.

It is found in the nucleus. This is an uncharacterized protein from Schizosaccharomyces pombe (strain 972 / ATCC 24843) (Fission yeast).